The primary structure comprises 180 residues: Large ribosomal subunit protein uL15 (180 aa).

Positions 1-62 (MKKERLEQAA…KTAGRGSKGQ (62 aa)) are disordered. Basic residues predominate over residues 35-44 (GAKKEKKRVG).

The protein belongs to the universal ribosomal protein uL15 family. Part of the 50S ribosomal subunit.

In terms of biological role, binds to the 23S rRNA. This is Large ribosomal subunit protein uL15 from Leptospira borgpetersenii serovar Hardjo-bovis (strain JB197).